The chain runs to 176 residues: NAD(P)H-quinone oxidoreductase subunit J (176 aa).

The span at 1-10 (MSETPTSPNQ) shows a compositional bias: polar residues. The disordered stretch occupies residues 1-22 (MSETPTSPNQDLPEAPQAGPLS).

The protein belongs to the complex I 30 kDa subunit family. As to quaternary structure, NDH-1 can be composed of about 15 different subunits; different subcomplexes with different compositions have been identified which probably have different functions.

The protein localises to the cellular thylakoid membrane. It catalyses the reaction a plastoquinone + NADH + (n+1) H(+)(in) = a plastoquinol + NAD(+) + n H(+)(out). The catalysed reaction is a plastoquinone + NADPH + (n+1) H(+)(in) = a plastoquinol + NADP(+) + n H(+)(out). Functionally, NDH-1 shuttles electrons from an unknown electron donor, via FMN and iron-sulfur (Fe-S) centers, to quinones in the respiratory and/or the photosynthetic chain. The immediate electron acceptor for the enzyme in this species is believed to be plastoquinone. Couples the redox reaction to proton translocation, and thus conserves the redox energy in a proton gradient. Cyanobacterial NDH-1 also plays a role in inorganic carbon-concentration. This chain is NAD(P)H-quinone oxidoreductase subunit J, found in Synechococcus sp. (strain RCC307).